The chain runs to 141 residues: Hemoglobin subunit alpha (141 aa).

The 141-residue stretch at 1-141 (VLSPADKSNV…VSTVLTSKYR (141 aa)) folds into the Globin domain. Ser-3 is modified (phosphoserine). 2 positions are modified to N6-succinyllysine: Lys-7 and Lys-11. At Lys-16 the chain carries N6-acetyllysine; alternate. Lys-16 is modified (N6-succinyllysine; alternate). Tyr-24 is subject to Phosphotyrosine. Ser-35 carries the post-translational modification Phosphoserine. Lys-40 is subject to N6-succinyllysine. Ser-49 is modified (phosphoserine). His-58 contacts O2. His-87 contacts heme b. Ser-102 carries the phosphoserine modification. Position 108 is a phosphothreonine (Thr-108). A phosphoserine mark is found at Ser-124 and Ser-131. A phosphothreonine mark is found at Thr-134 and Thr-137. Ser-138 carries the phosphoserine modification.

Belongs to the globin family. In terms of assembly, heterotetramer of two alpha chains and two beta chains. In terms of tissue distribution, red blood cells.

In terms of biological role, involved in oxygen transport from the lung to the various peripheral tissues. Functionally, hemopressin acts as an antagonist peptide of the cannabinoid receptor CNR1. Hemopressin-binding efficiently blocks cannabinoid receptor CNR1 and subsequent signaling. This is Hemoglobin subunit alpha (HBA) from Leontocebus fuscicollis (Brown-mantled tamarin).